A 136-amino-acid chain; its full sequence is Riboflavin kinase (136 aa).

15–20 (GLGEGR) contacts CDP. The Mg(2+) site is built by threonine 44 and asparagine 46. FMN is bound by residues threonine 103 and glutamate 111. 116–119 (YYLR) contacts CDP.

Belongs to the archaeal riboflavin kinase family. Mg(2+) is required as a cofactor.

The enzyme catalyses riboflavin + CTP = CDP + FMN + H(+). Its pathway is cofactor biosynthesis; FMN biosynthesis; FMN from riboflavin (CTP route): step 1/1. In terms of biological role, catalyzes the CTP-dependent phosphorylation of riboflavin (vitamin B2) to form flavin mononucleotide (FMN). This chain is Riboflavin kinase, found in Sulfurisphaera tokodaii (strain DSM 16993 / JCM 10545 / NBRC 100140 / 7) (Sulfolobus tokodaii).